The following is a 691-amino-acid chain: DNA ligase (691 aa).

Residues 41-45, 90-91, and glutamate 130 contribute to the NAD(+) site; these read DAEYD and SL. Catalysis depends on lysine 132, which acts as the N6-AMP-lysine intermediate. The NAD(+) site is built by arginine 153, glutamate 190, lysine 307, and lysine 331. The Zn(2+) site is built by cysteine 425, cysteine 428, cysteine 443, and cysteine 449. Residues 610 to 691 enclose the BRCT domain; sequence APQGVLAGKT…LHQLLEGNTP (82 aa).

This sequence belongs to the NAD-dependent DNA ligase family. LigA subfamily. Requires Mg(2+) as cofactor. The cofactor is Mn(2+).

It carries out the reaction NAD(+) + (deoxyribonucleotide)n-3'-hydroxyl + 5'-phospho-(deoxyribonucleotide)m = (deoxyribonucleotide)n+m + AMP + beta-nicotinamide D-nucleotide.. DNA ligase that catalyzes the formation of phosphodiester linkages between 5'-phosphoryl and 3'-hydroxyl groups in double-stranded DNA using NAD as a coenzyme and as the energy source for the reaction. It is essential for DNA replication and repair of damaged DNA. In Burkholderia ambifaria (strain ATCC BAA-244 / DSM 16087 / CCUG 44356 / LMG 19182 / AMMD) (Burkholderia cepacia (strain AMMD)), this protein is DNA ligase.